The following is a 955-amino-acid chain: Protein translocase subunit SecA (955 aa).

ATP is bound by residues Q87, 105–109, and D494; that span reads GEGKT. Positions 861–955 are disordered; sequence AAPAPAAPRP…KKAPRTKRKR (95 aa). Low complexity predominate over residues 874–888; it reads QEAAQQAQGTAAPSA. The segment covering 943–955 has biased composition (basic residues); the sequence is SKGKKAPRTKRKR.

This sequence belongs to the SecA family. As to quaternary structure, monomer and homodimer. Part of the essential Sec protein translocation apparatus which comprises SecA, SecYEG and auxiliary proteins SecDF. Other proteins may also be involved.

Its subcellular location is the cell membrane. The protein localises to the cytoplasm. It catalyses the reaction ATP + H2O + cellular proteinSide 1 = ADP + phosphate + cellular proteinSide 2.. Part of the Sec protein translocase complex. Interacts with the SecYEG preprotein conducting channel. Has a central role in coupling the hydrolysis of ATP to the transfer of proteins into and across the cell membrane, serving as an ATP-driven molecular motor driving the stepwise translocation of polypeptide chains across the membrane. The sequence is that of Protein translocase subunit SecA from Rhodococcus opacus (strain B4).